The primary structure comprises 318 residues: Cobalamin biosynthesis protein CobD (318 aa).

A run of 5 helical transmembrane segments spans residues 51–71 (VGGVLLLLLAVGITAGAAWGA), 77–97 (LVHPLAGVVVSALLGWTCLAA), 153–173 (DGVIAPLLFFMIGGAPLALAY), 206–226 (LIPARLTGLLMTLAAPLAGLS), and 296–316 (MYGAECLLVLLAAVMTTILTI).

This sequence belongs to the CobD/CbiB family.

It localises to the cell membrane. It participates in cofactor biosynthesis; adenosylcobalamin biosynthesis. In terms of biological role, converts cobyric acid to cobinamide by the addition of aminopropanol on the F carboxylic group. The sequence is that of Cobalamin biosynthesis protein CobD from Geobacter metallireducens (strain ATCC 53774 / DSM 7210 / GS-15).